A 408-amino-acid chain; its full sequence is D-galactonate dehydratase family member OG2516_05608 (408 aa).

Position 215 (aspartate 215) interacts with Mg(2+). Histidine 217 serves as a coordination point for D-arabinonate. Residues glutamate 241 and glutamate 267 each coordinate Mg(2+). Glutamate 267, arginine 288, histidine 317, and glutamate 344 together coordinate D-arabinonate.

It belongs to the mandelate racemase/muconate lactonizing enzyme family. GalD subfamily.

In terms of biological role, has no detectable activity with D-mannonate and with a panel of 70 other acid sugars (in vitro), in spite of the conservation of the residues that are expected to be important for catalytic activity and cofactor binding. May have evolved a divergent function. The chain is D-galactonate dehydratase family member OG2516_05608 from Oceanicola granulosus (strain ATCC BAA-861 / DSM 15982 / KCTC 12143 / HTCC2516).